A 195-amino-acid polypeptide reads, in one-letter code: NADH-quinone oxidoreductase subunit B (195 aa).

[4Fe-4S] cluster is bound by residues Cys-74, Cys-75, Cys-139, and Cys-169.

The protein belongs to the complex I 20 kDa subunit family. NDH-1 is composed of 14 different subunits. Subunits NuoB, C, D, E, F, and G constitute the peripheral sector of the complex. [4Fe-4S] cluster serves as cofactor.

It localises to the cell inner membrane. The enzyme catalyses a quinone + NADH + 5 H(+)(in) = a quinol + NAD(+) + 4 H(+)(out). Functionally, NDH-1 shuttles electrons from NADH, via FMN and iron-sulfur (Fe-S) centers, to quinones in the respiratory chain. The immediate electron acceptor for the enzyme in this species is believed to be ubiquinone. Couples the redox reaction to proton translocation (for every two electrons transferred, four hydrogen ions are translocated across the cytoplasmic membrane), and thus conserves the redox energy in a proton gradient. In Methylorubrum populi (strain ATCC BAA-705 / NCIMB 13946 / BJ001) (Methylobacterium populi), this protein is NADH-quinone oxidoreductase subunit B.